Here is a 147-residue protein sequence, read N- to C-terminus: Ribosome maturation factor RimP (147 aa).

Belongs to the RimP family.

It localises to the cytoplasm. In terms of biological role, required for maturation of 30S ribosomal subunits. In Legionella pneumophila (strain Paris), this protein is Ribosome maturation factor RimP.